The following is a 706-amino-acid chain: Protein kinase C theta type (706 aa).

The region spanning 1-107 (MSPFLRIGLS…KNNGKTEIWL (107 aa)) is the C2 domain. Tyr-90 is subject to Phosphotyrosine; by LCK. A Phorbol-ester/DAG-type 1 zinc finger spans residues 159–209 (CHEFTATFFPQPTFCSVCHEFVWGLNKQGYQCRQCNAAIHKKCIDKVIAKC). At Thr-219 the chain carries Phosphothreonine; by autocatalysis. The Phorbol-ester/DAG-type 2 zinc-finger motif lies at 231–281 (PHRFKVYNYKSPTFCEHCGTLLWGLARQGLKCDACGMNVHHRCQTKVANLC). Phosphoserine is present on Ser-348. Residues 380-634 (FILHKMLGKG…RGDIRQHPLF (255 aa)) form the Protein kinase domain. Residues 386-394 (LGKGSFGKV) and Lys-409 contribute to the ATP site. Asp-504 serves as the catalytic Proton acceptor. Thr-538 carries the phosphothreonine; by PDPK1 modification. Residues 635–706 (REINWEELER…MNPGMERLIS (72 aa)) enclose the AGC-kinase C-terminal domain. A phosphoserine mark is found at Ser-676, Ser-685, and Ser-695.

This sequence belongs to the protein kinase superfamily. AGC Ser/Thr protein kinase family. PKC subfamily. As to quaternary structure, part of a lipid raft complex composed at least of BCL10, CARD11, MALT1 and IKBKB. Interacts with GLRX3 (via N-terminus). Interacts with ECT2. Interacts with CCDC88A/GIV; the interaction leads to phosphorylation of CCDC88A and inhibition of its guanine nucleotide exchange factor activity. Interacts with PRKCH upstream open reading frame 2; the interaction leads to inhibition of kinase activity. Interacts with CD28. Mg(2+) is required as a cofactor. In terms of processing, autophosphorylation at Thr-219 is required for targeting to the TCR and cellular function of PRKCQ upon antigen receptor ligation. Following TCR stimulation, phosphorylated at Tyr-90 and Ser-685. In terms of tissue distribution, expressed in skeletal muscle, T-cells, megakaryoblastic cells and platelets.

Its subcellular location is the cytoplasm. The protein resides in the cell membrane. It catalyses the reaction L-seryl-[protein] + ATP = O-phospho-L-seryl-[protein] + ADP + H(+). The catalysed reaction is L-threonyl-[protein] + ATP = O-phospho-L-threonyl-[protein] + ADP + H(+). With respect to regulation, novel PKCs (PRKCD, PRKCE, PRKCH and PRKCQ) are calcium-insensitive, but activated by diacylglycerol (DAG) and phosphatidylserine. Three specific sites; Thr-538 (activation loop of the kinase domain), Ser-676 (turn motif) and Ser-695 (hydrophobic region), need to be phosphorylated for its full activation. Inhibited by PRKCH upstream open reading frame 2. Calcium-independent, phospholipid- and diacylglycerol (DAG)-dependent serine/threonine-protein kinase that mediates non-redundant functions in T-cell receptor (TCR) signaling, including T-cells activation, proliferation, differentiation and survival, by mediating activation of multiple transcription factors such as NF-kappa-B, JUN, NFATC1 and NFATC2. In TCR-CD3/CD28-co-stimulated T-cells, is required for the activation of NF-kappa-B and JUN, which in turn are essential for IL2 production, and participates in the calcium-dependent NFATC1 and NFATC2 transactivation. Mediates the activation of the canonical NF-kappa-B pathway (NFKB1) by direct phosphorylation of CARD11 on several serine residues, inducing CARD11 association with lipid rafts and recruitment of the BCL10-MALT1 complex, which then activates IKK complex, resulting in nuclear translocation and activation of NFKB1. May also play an indirect role in activation of the non-canonical NF-kappa-B (NFKB2) pathway. In the signaling pathway leading to JUN activation, acts by phosphorylating the mediator STK39/SPAK and may not act through MAP kinases signaling. Plays a critical role in TCR/CD28-induced NFATC1 and NFATC2 transactivation by participating in the regulation of reduced inositol 1,4,5-trisphosphate generation and intracellular calcium mobilization. After costimulation of T-cells through CD28 can phosphorylate CBLB and is required for the ubiquitination and subsequent degradation of CBLB, which is a prerequisite for the activation of TCR. During T-cells differentiation, plays an important role in the development of T-helper 2 (Th2) cells following immune and inflammatory responses, and, in the development of inflammatory autoimmune diseases, is necessary for the activation of IL17-producing Th17 cells. May play a minor role in Th1 response. Upon TCR stimulation, mediates T-cell protective survival signal by phosphorylating BAD, thus protecting T-cells from BAD-induced apoptosis, and by up-regulating BCL-X(L)/BCL2L1 levels through NF-kappa-B and JUN pathways. In platelets, regulates signal transduction downstream of the ITGA2B, CD36/GP4, F2R/PAR1 and F2RL3/PAR4 receptors, playing a positive role in 'outside-in' signaling and granule secretion signal transduction. May relay signals from the activated ITGA2B receptor by regulating the uncoupling of WASP and WIPF1, thereby permitting the regulation of actin filament nucleation and branching activity of the Arp2/3 complex. May mediate inhibitory effects of free fatty acids on insulin signaling by phosphorylating IRS1, which in turn blocks IRS1 tyrosine phosphorylation and downstream activation of the PI3K/AKT pathway. Phosphorylates MSN (moesin) in the presence of phosphatidylglycerol or phosphatidylinositol. Phosphorylates PDPK1 at 'Ser-504' and 'Ser-532' and negatively regulates its ability to phosphorylate PKB/AKT1. Phosphorylates CCDC88A/GIV and inhibits its guanine nucleotide exchange factor activity. Phosphorylates and activates LRRK1, which phosphorylates RAB proteins involved in intracellular trafficking. The protein is Protein kinase C theta type (PRKCQ) of Homo sapiens (Human).